The chain runs to 119 residues: Large ribosomal subunit protein uL18 (119 aa).

A disordered region spans residues 1–23 (MSQVDKAARRQKIKDRSRVSVQG).

The protein belongs to the universal ribosomal protein uL18 family. Part of the 50S ribosomal subunit; part of the 5S rRNA/L5/L18/L25 subcomplex. Contacts the 5S and 23S rRNAs.

Its function is as follows. This is one of the proteins that bind and probably mediate the attachment of the 5S RNA into the large ribosomal subunit, where it forms part of the central protuberance. The protein is Large ribosomal subunit protein uL18 of Chlorobium chlorochromatii (strain CaD3).